Consider the following 123-residue polypeptide: Small ribosomal subunit protein uS12 (123 aa).

Asp89 carries the post-translational modification 3-methylthioaspartic acid.

Belongs to the universal ribosomal protein uS12 family. Part of the 30S ribosomal subunit. Contacts proteins S8 and S17. May interact with IF1 in the 30S initiation complex.

Its function is as follows. With S4 and S5 plays an important role in translational accuracy. In terms of biological role, interacts with and stabilizes bases of the 16S rRNA that are involved in tRNA selection in the A site and with the mRNA backbone. Located at the interface of the 30S and 50S subunits, it traverses the body of the 30S subunit contacting proteins on the other side and probably holding the rRNA structure together. The combined cluster of proteins S8, S12 and S17 appears to hold together the shoulder and platform of the 30S subunit. The protein is Small ribosomal subunit protein uS12 of Rhizobium leguminosarum bv. trifolii (strain WSM2304).